We begin with the raw amino-acid sequence, 458 residues long: UDP-N-acetylmuramoylalanine--D-glutamate ligase (458 aa).

Residue 124 to 130 (GSDGKTT) coordinates ATP.

The protein belongs to the MurCDEF family.

The protein localises to the cytoplasm. The enzyme catalyses UDP-N-acetyl-alpha-D-muramoyl-L-alanine + D-glutamate + ATP = UDP-N-acetyl-alpha-D-muramoyl-L-alanyl-D-glutamate + ADP + phosphate + H(+). It participates in cell wall biogenesis; peptidoglycan biosynthesis. In terms of biological role, cell wall formation. Catalyzes the addition of glutamate to the nucleotide precursor UDP-N-acetylmuramoyl-L-alanine (UMA). The protein is UDP-N-acetylmuramoylalanine--D-glutamate ligase of Clostridium botulinum (strain Alaska E43 / Type E3).